Consider the following 323-residue polypeptide: Lipoyl synthase (323 aa).

Residues Cys-65, Cys-70, Cys-76, Cys-91, Cys-95, Cys-98, and Ser-304 each coordinate [4Fe-4S] cluster. Residues 77–293 form the Radical SAM core domain; the sequence is FNNGTATFMI…KKEALSIGFT (217 aa).

It belongs to the radical SAM superfamily. Lipoyl synthase family. The cofactor is [4Fe-4S] cluster.

Its subcellular location is the cytoplasm. It catalyses the reaction [[Fe-S] cluster scaffold protein carrying a second [4Fe-4S](2+) cluster] + N(6)-octanoyl-L-lysyl-[protein] + 2 oxidized [2Fe-2S]-[ferredoxin] + 2 S-adenosyl-L-methionine + 4 H(+) = [[Fe-S] cluster scaffold protein] + N(6)-[(R)-dihydrolipoyl]-L-lysyl-[protein] + 4 Fe(3+) + 2 hydrogen sulfide + 2 5'-deoxyadenosine + 2 L-methionine + 2 reduced [2Fe-2S]-[ferredoxin]. It participates in protein modification; protein lipoylation via endogenous pathway; protein N(6)-(lipoyl)lysine from octanoyl-[acyl-carrier-protein]: step 2/2. In terms of biological role, catalyzes the radical-mediated insertion of two sulfur atoms into the C-6 and C-8 positions of the octanoyl moiety bound to the lipoyl domains of lipoate-dependent enzymes, thereby converting the octanoylated domains into lipoylated derivatives. In Buchnera aphidicola subsp. Acyrthosiphon pisum (strain 5A), this protein is Lipoyl synthase.